The chain runs to 117 residues: Large ribosomal subunit protein bL20 (117 aa).

This sequence belongs to the bacterial ribosomal protein bL20 family.

Binds directly to 23S ribosomal RNA and is necessary for the in vitro assembly process of the 50S ribosomal subunit. It is not involved in the protein synthesizing functions of that subunit. In Vibrio campbellii (strain ATCC BAA-1116), this protein is Large ribosomal subunit protein bL20.